Consider the following 66-residue polypeptide: Large ribosomal subunit protein bL35 (66 aa).

This sequence belongs to the bacterial ribosomal protein bL35 family.

The protein is Large ribosomal subunit protein bL35 of Neorickettsia sennetsu (strain ATCC VR-367 / Miyayama) (Ehrlichia sennetsu).